A 130-amino-acid polypeptide reads, in one-letter code: Small ribosomal subunit protein uS11 (130 aa).

This sequence belongs to the universal ribosomal protein uS11 family. In terms of assembly, part of the 30S ribosomal subunit. Interacts with proteins S7 and S18. Binds to IF-3.

Its function is as follows. Located on the platform of the 30S subunit, it bridges several disparate RNA helices of the 16S rRNA. Forms part of the Shine-Dalgarno cleft in the 70S ribosome. The sequence is that of Small ribosomal subunit protein uS11 from Campylobacter jejuni subsp. jejuni serotype O:6 (strain 81116 / NCTC 11828).